Reading from the N-terminus, the 133-residue chain is Ribonucleases P/MRP protein subunit POP8 (133 aa).

In terms of assembly, component of nuclear RNase P and RNase MRP complexes. RNase P consists of an RNA moiety and at least 9 protein subunits including POP1, POP3, POP4, POP5, POP6, POP7, POP8, RPP1 and RPR2. RNase MRP complex consists of an RNA moiety and at least 10 protein subunits including POP1, POP3, POP4, POP5, POP6, POP7, POP8, RMP1, RPP1 and SNM1, many of which are shared with the RNase P complex.

It localises to the nucleus. The enzyme catalyses Endonucleolytic cleavage of RNA, removing 5'-extranucleotides from tRNA precursor.. In terms of biological role, component of ribonuclease P, a protein complex that generates mature tRNA molecules by cleaving their 5'-ends. Also a component of RNase MRP, which cleaves pre-rRNA sequences. The sequence is that of Ribonucleases P/MRP protein subunit POP8 (POP8) from Saccharomyces cerevisiae (strain ATCC 204508 / S288c) (Baker's yeast).